The primary structure comprises 133 residues: ATP synthase epsilon chain, chloroplastic (133 aa).

Belongs to the ATPase epsilon chain family. F-type ATPases have 2 components, CF(1) - the catalytic core - and CF(0) - the membrane proton channel. CF(1) has five subunits: alpha(3), beta(3), gamma(1), delta(1), epsilon(1). CF(0) has three main subunits: a, b and c.

The protein resides in the plastid. It localises to the chloroplast thylakoid membrane. Produces ATP from ADP in the presence of a proton gradient across the membrane. The sequence is that of ATP synthase epsilon chain, chloroplastic from Ipomoea batatas (Sweet potato).